Reading from the N-terminus, the 166-residue chain is Salivary acidic proline-rich phosphoprotein 1/2 (166 aa).

A signal peptide spans 1–16 (MLLILLSVALLAFSSA). A disordered region spans residues 16-166 (AQDLDEDVSQ…QGPPQGQSPQ (151 aa)). Pyrrolidone carboxylic acid is present on Gln17. The segment at 17-46 (QDLDEDVSQEDVPLVISDGGDSEQFIDEER) is inhibits hydroxyapatite formation, binds to hydroxyapatite and calcium. Ser24 bears the Phosphoserine; by FAM20C mark. A Phosphoserine; alternate modification is found at Ser33. O-linked (GlcA) serine; alternate glycans are attached at residues Ser33 and Ser38. Position 38 is a phosphoserine; by FAM20C; alternate (Ser38). Composition is skewed to low complexity over residues 48–61 (GPPL…PSAG) and 68–82 (GPQQ…QQQQ). Pro residues-rich tracts occupy residues 83 to 111 (GPPP…PQGP) and 137 to 159 (GPPP…PQGP).

Proteolytically cleaved; PRP-2, PRP-1, PIF-S and Db-S yield PRP-4, PRP-3 (protein A), PIF-F and Db-F, respectively. Post-translationally, a hexuronic acid was shown to be linked to Ser-33 in about 40% of the polypeptides. Neither the structure of the carbohydrate (whether glucuronic acid or an isomer of), nor the linkage (whether a glycoside or an ester) has been definitely established.

The protein resides in the secreted. Its function is as follows. PRP's act as highly potent inhibitors of crystal growth of calcium phosphates. They provide a protective and reparative environment for dental enamel which is important for the integrity of the teeth. This chain is Salivary acidic proline-rich phosphoprotein 1/2 (PRH1), found in Homo sapiens (Human).